Here is a 248-residue protein sequence, read N- to C-terminus: Tyrosine recombinase XerD-like (248 aa).

Residues 1-72 (MKSYIEPFIA…TANQFLYYLY (72 aa)) form the Core-binding (CB) domain. The region spanning 85–248 (DTMKVMRTEK…PVTLEKYYKS (164 aa)) is the Tyr recombinase domain. Catalysis depends on residues lysine 149 and arginine 213. Tyrosine 245 serves as the catalytic O-(3'-phospho-DNA)-tyrosine intermediate.

This sequence belongs to the 'phage' integrase family. XerD-like subfamily.

Its subcellular location is the cytoplasm. Its function is as follows. Putative tyrosine recombinase. Not involved in the cutting and rejoining of the recombining DNA molecules on dif(SL) site. This Streptococcus pyogenes serotype M28 (strain MGAS6180) protein is Tyrosine recombinase XerD-like.